Reading from the N-terminus, the 338-residue chain is Phenylalanine--tRNA ligase alpha subunit (338 aa).

Residue glutamate 253 coordinates Mg(2+).

It belongs to the class-II aminoacyl-tRNA synthetase family. Phe-tRNA synthetase alpha subunit type 1 subfamily. Tetramer of two alpha and two beta subunits. Mg(2+) serves as cofactor.

It localises to the cytoplasm. It carries out the reaction tRNA(Phe) + L-phenylalanine + ATP = L-phenylalanyl-tRNA(Phe) + AMP + diphosphate + H(+). The chain is Phenylalanine--tRNA ligase alpha subunit from Geotalea daltonii (strain DSM 22248 / JCM 15807 / FRC-32) (Geobacter daltonii).